Reading from the N-terminus, the 369-residue chain is CASP-like protein 4U1 (369 aa).

Residues 1 to 162 (MASTPRTPAP…RAETKLPLSS (162 aa)) form a disordered region. At 1-222 (MASTPRTPAP…AVAAVAERRE (222 aa)) the chain is on the cytoplasmic side. The segment covering 7–23 (TPAPERSPPPVPTPPPP) has biased composition (pro residues). A compositionally biased stretch (basic and acidic residues) spans 36–51 (SPREEASFSSDGREGA). Composition is skewed to low complexity over residues 87-96 (ANKAAAATAE) and 114-127 (SSQT…SPTP). A helical transmembrane segment spans residues 223 to 243 (LLLALRLATAVLSLAAFSVIA). Over 244–262 (SARTSGWAGDYYARHLQYR) the chain is Extracellular. The helical transmembrane segment at 263 to 283 (YAVAVNVIVFAYSVAQSLGKI) threads the bilayer. At 284 to 300 (RHLVSPRFTFRTMSSYY) the chain is on the cytoplasmic side. Residues 301-321 (CSLFLDQVLAYLLMSASSAAA) form a helical membrane-spanning segment. The Extracellular segment spans residues 322 to 339 (SRNDLWVSRFGTDAFVRK). A helical transmembrane segment spans residues 340–360 (ITGALWLSFVAFLVLALNAVI). Residues 361 to 369 (SXANLFSMV) are Cytoplasmic-facing.

The protein belongs to the Casparian strip membrane proteins (CASP) family. In terms of assembly, homodimer and heterodimers.

It is found in the cell membrane. This is CASP-like protein 4U1 from Zea mays (Maize).